We begin with the raw amino-acid sequence, 277 residues long: Probable endonuclease 4 (277 aa).

Zn(2+) contacts are provided by histidine 67, histidine 107, glutamate 142, aspartate 176, histidine 179, histidine 211, aspartate 224, histidine 226, and glutamate 256.

This sequence belongs to the AP endonuclease 2 family. The cofactor is Zn(2+).

The enzyme catalyses Endonucleolytic cleavage to 5'-phosphooligonucleotide end-products.. Functionally, endonuclease IV plays a role in DNA repair. It cleaves phosphodiester bonds at apurinic or apyrimidinic (AP) sites, generating a 3'-hydroxyl group and a 5'-terminal sugar phosphate. This Clostridium beijerinckii (strain ATCC 51743 / NCIMB 8052) (Clostridium acetobutylicum) protein is Probable endonuclease 4.